The primary structure comprises 334 residues: Spermidine synthase 1 (334 aa).

Residues 1-16 (MDAKETSATDLKRPRE) show a composition bias toward basic and acidic residues. Positions 1–35 (MDAKETSATDLKRPREEDDNGGAATMETENGDQKK) are disordered. Positions 45–282 (PGWFSEMSPM…GVIGFMLCST (238 aa)) constitute a PABS domain. An S-adenosyl 3-(methylsulfanyl)propylamine-binding site is contributed by Q76. Y106 lines the putrescine pocket. S-adenosyl 3-(methylsulfanyl)propylamine contacts are provided by residues Q107, D131, E151, 182–183 (DG), and D201. Residue D201 is the Proton acceptor of the active site. Residues 201–204 (DSSD) and Y270 each bind putrescine.

The protein belongs to the spermidine/spermine synthase family. In terms of assembly, homotetramer and heterodimer. Component of a multiprotein complex. Interacts with SPMS and SPDSYN2.

The catalysed reaction is S-adenosyl 3-(methylsulfanyl)propylamine + putrescine = S-methyl-5'-thioadenosine + spermidine + H(+). It functions in the pathway amine and polyamine biosynthesis; spermidine biosynthesis; spermidine from putrescine: step 1/1. The sequence is that of Spermidine synthase 1 (SPDSYN1) from Arabidopsis thaliana (Mouse-ear cress).